The chain runs to 150 residues: Ribosomal RNA large subunit methyltransferase H (150 aa).

S-adenosyl-L-methionine-binding positions include Ala100 and 118–123; that span reads LSEMTF.

Belongs to the RNA methyltransferase RlmH family. As to quaternary structure, homodimer.

It localises to the cytoplasm. The catalysed reaction is pseudouridine(1915) in 23S rRNA + S-adenosyl-L-methionine = N(3)-methylpseudouridine(1915) in 23S rRNA + S-adenosyl-L-homocysteine + H(+). Specifically methylates the pseudouridine at position 1915 (m3Psi1915) in 23S rRNA. This Helicobacter pylori (strain P12) protein is Ribosomal RNA large subunit methyltransferase H.